A 488-amino-acid polypeptide reads, in one-letter code: MENLTKHSIECSSFRGDWECKNQFERKQGSQEGHFSEMIFTPEDMPTFSIQHQRIHTDEKLLECKECGKDFSFVSVLVRHQRIHTGEKPYECKECGKAFGSGANLAYHQRIHTGEKPFECKECGKAFGSGSNLTHHQRIHTGEKPYECKECGKAFSFGSGLIRHQIIHSGEKPYECKECGKSFSFESALIRHHRIHTGEKPYECIDCGKAFGSGSNLTQHRRIHTGEKPYECKACGMAFSSGSALTRHQRIHTGEKPYICNECGKAFSFGSALTRHQRIHTGEKPYVCKECGKAFNSGSDLTQHQRIHTGEKPYECKECEKAFRSGSKLIQHQRMHTGEKPYECKECGKTFSSGSDLTQHHRIHTGEKPYECKECGKAFGSGSKLIQHQLIHTGERPYECKECGKSFSSGSALNRHQRIHTGEKPYECKECGKAFYSGSSLTQHQRIHTGEKLYECKNCGKAYGRDSEFQQHKKSHNGKKLCELETIN.

15 consecutive C2H2-type zinc fingers follow at residues 62–84 (LECK…QRIH), 90–112 (YECK…QRIH), 118–140 (FECK…QRIH), 146–168 (YECK…QIIH), 174–196 (YECK…HRIH), 202–224 (YECI…RRIH), 230–252 (YECK…QRIH), 258–280 (YICN…QRIH), 286–308 (YVCK…QRIH), 314–336 (YECK…QRMH), 342–364 (YECK…HRIH), 370–392 (YECK…QLIH), 398–420 (YECK…QRIH), 426–448 (YECK…QRIH), and 454–476 (YECK…KKSH).

This sequence belongs to the krueppel C2H2-type zinc-finger protein family.

Its subcellular location is the nucleus. Functionally, may be involved in transcriptional regulation. This chain is Zinc finger protein 345 (ZNF345), found in Homo sapiens (Human).